The primary structure comprises 459 residues: MNRLPSSASALACSAHALNLIEKRTLDHEEMKALNREVIEYFKEHVNPGFLEYRKSVTAGGDYGAVEWQAGGLNTLVDTQGQEFIDCLGGFGIFNVGHRNPVVVSAVQNQLAKQPLHSQELLDPLRAMLAKTLAALTPGKLKYSFFCNSGTESVEAALKLAKAYQSPRGKFTFIATSGAFHGKSLGALSATAKSTFRKPFMPLLPGFRHVPFGNIEAMRTALSECKKTGDDVAAVILEPIQGEGGVILPPPGYLTAVRKLCDEFGALMILDEVQTGMGRTGKMFACEHENVQPDILCLAKALGGGVMPIGATIATEEVFSVLFDNPFLHTTTFGGNPLACAAALATINVLLEQNLPAQAEQKGDMLLDGFRQLAREYPDLVQEARGKGMLMAIEFVDNEIGYNFASEMFRQRVLVAGTLNNAKTIRIEPPLTLTIEQCEQVIKAARKALAAIRVSVEEA.

Residues 150–151 and Gln274 contribute to the pyridoxal 5'-phosphate site; that span reads GT. N6-(pyridoxal phosphate)lysine is present on Lys300. Residue Thr332 coordinates pyridoxal 5'-phosphate.

This sequence belongs to the class-III pyridoxal-phosphate-dependent aminotransferase family. Putrescine aminotransferase subfamily. Requires pyridoxal 5'-phosphate as cofactor.

It carries out the reaction an alkane-alpha,omega-diamine + 2-oxoglutarate = an omega-aminoaldehyde + L-glutamate. The enzyme catalyses putrescine + 2-oxoglutarate = 1-pyrroline + L-glutamate + H2O. It catalyses the reaction cadaverine + 2-oxoglutarate = 5-aminopentanal + L-glutamate. It functions in the pathway amine and polyamine degradation; putrescine degradation; 4-aminobutanal from putrescine (transaminase route): step 1/1. Its function is as follows. Catalyzes the aminotransferase reaction from putrescine to 2-oxoglutarate, leading to glutamate and 4-aminobutanal, which spontaneously cyclizes to form 1-pyrroline. This is the first step in one of two pathways for putrescine degradation, where putrescine is converted into 4-aminobutanoate (gamma-aminobutyrate or GABA) via 4-aminobutanal. Also functions as a cadaverine transaminase in a a L-lysine degradation pathway to succinate that proceeds via cadaverine, glutarate and L-2-hydroxyglutarate. This chain is Putrescine aminotransferase, found in Escherichia coli (strain SMS-3-5 / SECEC).